The primary structure comprises 388 residues: Succinate--CoA ligase [ADP-forming] subunit beta (388 aa).

The 236-residue stretch at 9 to 244 folds into the ATP-grasp domain; sequence KQLFAQYGLP…PAQNDAREAH (236 aa). ATP-binding positions include Lys-46, 53–55, Glu-99, Thr-102, and Glu-107; that span reads GRG. Residues Asn-199 and Asp-213 each coordinate Mg(2+). Substrate is bound by residues Asn-264 and 321–323; that span reads GIV.

This sequence belongs to the succinate/malate CoA ligase beta subunit family. Heterotetramer of two alpha and two beta subunits. Mg(2+) serves as cofactor.

The enzyme catalyses succinate + ATP + CoA = succinyl-CoA + ADP + phosphate. It catalyses the reaction GTP + succinate + CoA = succinyl-CoA + GDP + phosphate. The protein operates within carbohydrate metabolism; tricarboxylic acid cycle; succinate from succinyl-CoA (ligase route): step 1/1. Its function is as follows. Succinyl-CoA synthetase functions in the citric acid cycle (TCA), coupling the hydrolysis of succinyl-CoA to the synthesis of either ATP or GTP and thus represents the only step of substrate-level phosphorylation in the TCA. The beta subunit provides nucleotide specificity of the enzyme and binds the substrate succinate, while the binding sites for coenzyme A and phosphate are found in the alpha subunit. The protein is Succinate--CoA ligase [ADP-forming] subunit beta of Edwardsiella ictaluri (strain 93-146).